The following is a 134-amino-acid chain: Profilin (134 aa).

The protein belongs to the profilin family. Occurs in many kinds of cells as a complex with monomeric actin in a 1:1 ratio.

It localises to the cytoplasm. The protein localises to the cytoskeleton. Functionally, binds to actin and affects the structure of the cytoskeleton. At high concentrations, profilin prevents the polymerization of actin, whereas it enhances it at low concentrations. By binding to PIP2, it inhibits the formation of IP3 and DG. In Daucus carota (Wild carrot), this protein is Profilin.